Consider the following 82-residue polypeptide: Small ribosomal subunit protein bS20 (82 aa).

This sequence belongs to the bacterial ribosomal protein bS20 family.

Binds directly to 16S ribosomal RNA. In Streptococcus pyogenes serotype M12 (strain MGAS2096), this protein is Small ribosomal subunit protein bS20.